The chain runs to 458 residues: Argininosuccinate lyase (458 aa).

It belongs to the lyase 1 family. Argininosuccinate lyase subfamily.

Its subcellular location is the cytoplasm. The catalysed reaction is 2-(N(omega)-L-arginino)succinate = fumarate + L-arginine. The protein operates within amino-acid biosynthesis; L-arginine biosynthesis; L-arginine from L-ornithine and carbamoyl phosphate: step 3/3. The protein is Argininosuccinate lyase of Lachnospira eligens (strain ATCC 27750 / DSM 3376 / VPI C15-48 / C15-B4) (Eubacterium eligens).